The sequence spans 728 residues: 1,4-alpha-glucan branching enzyme GlgB (728 aa).

The Nucleophile role is filled by Asp405. Glu458 serves as the catalytic Proton donor.

The protein belongs to the glycosyl hydrolase 13 family. GlgB subfamily. In terms of assembly, monomer.

It carries out the reaction Transfers a segment of a (1-&gt;4)-alpha-D-glucan chain to a primary hydroxy group in a similar glucan chain.. It functions in the pathway glycan biosynthesis; glycogen biosynthesis. In terms of biological role, catalyzes the formation of the alpha-1,6-glucosidic linkages in glycogen by scission of a 1,4-alpha-linked oligosaccharide from growing alpha-1,4-glucan chains and the subsequent attachment of the oligosaccharide to the alpha-1,6 position. The chain is 1,4-alpha-glucan branching enzyme GlgB from Escherichia coli O6:K15:H31 (strain 536 / UPEC).